Reading from the N-terminus, the 214-residue chain is MRIILLGAPGAGKGTQAQYLMGKYGIPQISTGDMLRAAIKAGTELGNAAKRVMDEGKLVSDELIIGLVKERIAQDDCKGGFLLDGFPRTIPQADAMKEAGINVDHVIEFDVPDEVIVERMAGRRVHPASGRVYHLQYNPPQNDGKDDETGEDLVIRADDQEDTVRHRLGVYHEQTKPLVDYYQSEASANNCQYHKIDGTKAVDVVSDQLSSLLG.

10–15 lines the ATP pocket; it reads GAGKGT. The segment at 30-59 is NMP; it reads STGDMLRAAIKAGTELGNAAKRVMDEGKLV. Residues threonine 31, arginine 36, 57–59, 85–88, and glutamine 92 contribute to the AMP site; these read KLV and GFPR. Positions 122-159 are LID; sequence GRRVHPASGRVYHLQYNPPQNDGKDDETGEDLVIRADD. Residues arginine 123 and 132 to 133 each bind ATP; that span reads VY. AMP is bound by residues arginine 156 and arginine 167. Lysine 200 provides a ligand contact to ATP.

The protein belongs to the adenylate kinase family. Monomer.

The protein resides in the cytoplasm. It catalyses the reaction AMP + ATP = 2 ADP. Its pathway is purine metabolism; AMP biosynthesis via salvage pathway; AMP from ADP: step 1/1. In terms of biological role, catalyzes the reversible transfer of the terminal phosphate group between ATP and AMP. Plays an important role in cellular energy homeostasis and in adenine nucleotide metabolism. This chain is Adenylate kinase, found in Pseudoalteromonas atlantica (strain T6c / ATCC BAA-1087).